The sequence spans 121 residues: Small ribosomal subunit protein uS13 (121 aa).

The segment at 91 to 121 (HRMSLPVRGQRTRTNARTRRGSRKTVAGRKK) is disordered. A compositionally biased stretch (basic residues) spans 100–121 (QRTRTNARTRRGSRKTVAGRKK).

This sequence belongs to the universal ribosomal protein uS13 family. In terms of assembly, part of the 30S ribosomal subunit. Forms a loose heterodimer with protein S19. Forms two bridges to the 50S subunit in the 70S ribosome.

In terms of biological role, located at the top of the head of the 30S subunit, it contacts several helices of the 16S rRNA. In the 70S ribosome it contacts the 23S rRNA (bridge B1a) and protein L5 of the 50S subunit (bridge B1b), connecting the 2 subunits; these bridges are implicated in subunit movement. Contacts the tRNAs in the A and P-sites. This Prochlorococcus marinus (strain MIT 9515) protein is Small ribosomal subunit protein uS13.